We begin with the raw amino-acid sequence, 231 residues long: uncharacterized protein (231 aa).

The segment at 43 to 76 adopts an SWIM-type zinc-finger fold; that stretch reads YKVKVDLDNNYFGLCTCQYKYNCKHAYALIEAYE.

This is an uncharacterized protein from Methanocaldococcus jannaschii (strain ATCC 43067 / DSM 2661 / JAL-1 / JCM 10045 / NBRC 100440) (Methanococcus jannaschii).